The following is a 234-amino-acid chain: Ion-translocating oxidoreductase complex subunit E (234 aa).

A run of 5 helical transmembrane segments spans residues 62–82, 92–112, 116–136, 151–171, and 205–225; these read LGLG…ISLF, IPIY…LMNA, TLYQ…IIIG, IWDG…LGAL, and SFLL…LLAI.

The protein belongs to the NqrDE/RnfAE family. The complex is composed of six subunits: RnfA, RnfB, RnfC, RnfD, RnfE and RnfG.

It localises to the cell inner membrane. In terms of biological role, part of a membrane-bound complex that couples electron transfer with translocation of ions across the membrane. In Haemophilus influenzae (strain PittGG), this protein is Ion-translocating oxidoreductase complex subunit E.